The chain runs to 184 residues: Ribosome-recycling factor (184 aa).

Belongs to the RRF family.

The protein localises to the cytoplasm. Its function is as follows. Responsible for the release of ribosomes from messenger RNA at the termination of protein biosynthesis. May increase the efficiency of translation by recycling ribosomes from one round of translation to another. This is Ribosome-recycling factor from Cutibacterium acnes (strain DSM 16379 / KPA171202) (Propionibacterium acnes).